Here is a 331-residue protein sequence, read N- to C-terminus: Putative serine/threonine-protein kinase ZK507.1 (331 aa).

The 270-residue stretch at 1 to 270 (MKVNEEGFAI…CKLTLKEPLV (270 aa)) folds into the Protein kinase domain. The active-site Proton acceptor is the D116. Positions 302 to 314 (SDRNEENSLDRSK) are enriched in basic and acidic residues. The tract at residues 302 to 331 (SDRNEENSLDRSKTGTLSFNNSKNKKPSRY) is disordered.

It belongs to the protein kinase superfamily. Ser/Thr protein kinase family.

The catalysed reaction is L-seryl-[protein] + ATP = O-phospho-L-seryl-[protein] + ADP + H(+). It catalyses the reaction L-threonyl-[protein] + ATP = O-phospho-L-threonyl-[protein] + ADP + H(+). The polypeptide is Putative serine/threonine-protein kinase ZK507.1 (Caenorhabditis elegans).